The sequence spans 66 residues: Large ribosomal subunit protein bL33c (66 aa).

The protein belongs to the bacterial ribosomal protein bL33 family.

The protein resides in the plastid. The protein localises to the chloroplast. This is Large ribosomal subunit protein bL33c from Lobularia maritima (Sweet alyssum).